The sequence spans 241 residues: MKKIFAANWKLFKSPKETREFFGQFKELAGKATGEVVFFPSAISLEAASESLKGTSIKFGAQNCYFQAQGAFTGENSAQVVKDLGGSYVLIGHSERRAIFGEGDALVADKVAFVQGLGLTPMLCIGETLQERESAKTFRVLETQLNLGLAKADKTKPVVVAYEPVWAIGTGKVATPEQVAETHTDVFNILKALGFETAPILYGGSVKPDNAAGLIKQPHVNGFLVGGASLEAKSFSEIASV.

Substrate is bound at residue 8-10 (NWK). His-93 functions as the Electrophile in the catalytic mechanism. Glu-163 (proton acceptor) is an active-site residue. Substrate contacts are provided by residues Gly-169, Ser-205, and 226–227 (GG).

Belongs to the triosephosphate isomerase family. As to quaternary structure, homodimer.

The protein resides in the cytoplasm. The catalysed reaction is D-glyceraldehyde 3-phosphate = dihydroxyacetone phosphate. Its pathway is carbohydrate biosynthesis; gluconeogenesis. The protein operates within carbohydrate degradation; glycolysis; D-glyceraldehyde 3-phosphate from glycerone phosphate: step 1/1. Functionally, involved in the gluconeogenesis. Catalyzes stereospecifically the conversion of dihydroxyacetone phosphate (DHAP) to D-glyceraldehyde-3-phosphate (G3P). The sequence is that of Triosephosphate isomerase from Bdellovibrio bacteriovorus (strain ATCC 15356 / DSM 50701 / NCIMB 9529 / HD100).